We begin with the raw amino-acid sequence, 581 residues long: Proline--tRNA ligase (581 aa).

The protein belongs to the class-II aminoacyl-tRNA synthetase family. ProS type 1 subfamily. Homodimer.

The protein localises to the cytoplasm. It carries out the reaction tRNA(Pro) + L-proline + ATP = L-prolyl-tRNA(Pro) + AMP + diphosphate. Its function is as follows. Catalyzes the attachment of proline to tRNA(Pro) in a two-step reaction: proline is first activated by ATP to form Pro-AMP and then transferred to the acceptor end of tRNA(Pro). As ProRS can inadvertently accommodate and process non-cognate amino acids such as alanine and cysteine, to avoid such errors it has two additional distinct editing activities against alanine. One activity is designated as 'pretransfer' editing and involves the tRNA(Pro)-independent hydrolysis of activated Ala-AMP. The other activity is designated 'posttransfer' editing and involves deacylation of mischarged Ala-tRNA(Pro). The misacylated Cys-tRNA(Pro) is not edited by ProRS. This is Proline--tRNA ligase from Polaromonas naphthalenivorans (strain CJ2).